A 194-amino-acid chain; its full sequence is Mitochondrial import inner membrane translocase subunit Tim22 (194 aa).

Disulfide bonds link Cys-69–Cys-141 and Cys-160–Cys-179. 3 helical membrane passes run 74–94 (ALAC…TAGI), 123–143 (MSYA…ECLV), and 170–190 (AGLK…AAID).

Belongs to the Tim17/Tim22/Tim23 family. In terms of assembly, component of the TIM22 complex, whose core is composed of TIMM22, associated with peripheral protein FXC1/TIMM10B and the 70 kDa heterohexamer. In most cases, the 70 kDa complex is composed of TIMM9 and TIMM10 (TIMM10A or TIMM10B). A small fraction of the 70 kDa complex is composed of TIMM8 (TIMM8A/DDP1 or TIMM8B/DDP2) and TIMM13. The TIM22 complex also contains AGK and TIMM29. Interacts directly with TIMM9, TIMM10A and FXC1/TIMM10B. Interacts (when oxidized) with TIMM29; interaction is direct. Post-translationally, disulfide bonds promote efficient assembly of the TIM22 complex.

It is found in the mitochondrion inner membrane. Its function is as follows. Essential core component of the TIM22 complex, a complex that mediates the import and insertion of multi-pass transmembrane proteins into the mitochondrial inner membrane. In the TIM22 complex, it constitutes the voltage-activated and signal-gated channel. Forms a twin-pore translocase that uses the membrane potential as external driving force in 2 voltage-dependent steps. This Bos taurus (Bovine) protein is Mitochondrial import inner membrane translocase subunit Tim22 (TIMM22).